A 320-amino-acid chain; its full sequence is Transaldolase (320 aa).

The active-site Schiff-base intermediate with substrate is Lys135.

Belongs to the transaldolase family. Type 1 subfamily. Homodimer.

The protein localises to the cytoplasm. The enzyme catalyses D-sedoheptulose 7-phosphate + D-glyceraldehyde 3-phosphate = D-erythrose 4-phosphate + beta-D-fructose 6-phosphate. Its pathway is carbohydrate degradation; pentose phosphate pathway; D-glyceraldehyde 3-phosphate and beta-D-fructose 6-phosphate from D-ribose 5-phosphate and D-xylulose 5-phosphate (non-oxidative stage): step 2/3. Its function is as follows. Transaldolase is important for the balance of metabolites in the pentose-phosphate pathway. This is Transaldolase from Colwellia psychrerythraea (strain 34H / ATCC BAA-681) (Vibrio psychroerythus).